The primary structure comprises 414 residues: MVLGKVKSLTISFDCLNDSNVPVYSSGDTVSGRVNLEVTGEIRVKSLKIHARGHAKVRWTESRNAGSNTAYTQNYTEEVEYFNHKDILIGHERDDDNSEEGFHTIHSGRHEYAFSFELPQTPLATSFEGRHGSVRYWVKAELHRPWLLPVKLKKEFTVFEHIDINTPSLLSPQAGTKEKTLCCWFCTSGPISLSAKIERKGYTPGESIQIYAEIENCSSRMVVPKAAIYQTQAFYAKGKMKEVKQLVANLRGESLSSGKTETWNGKLLKIPPVSPSILDCSIIRVEYSLMVYVDIPGAMDLFLNLPLVIGTIPLHPFGSRTSSVSSQCSMNMNWLSLSLPERPEAPPSYAEVVTEEQRRNNLAPVSACDDFERALQGPLFAYIQEFRFLPPPLYSEIDPNPDQSADDRPSCPSR.

Short sequence motifs (PPxY motif) lie at residues 346–349 (PPSY) and 391–394 (PPLY). The tract at residues 393-414 (LYSEIDPNPDQSADDRPSCPSR) is disordered. The span at 405–414 (ADDRPSCPSR) shows a compositional bias: basic and acidic residues.

This sequence belongs to the arrestin family. As to quaternary structure, interacts (via PPxY motifs) with NEDD4 (via WW domains). Interacts with ADRB2. Interacts with ADRB3. Interacts with HGS (via PPxY motifs). Does not bind TXN (thioredoxin). Interacts with ITCH.

Its subcellular location is the cytoplasm. The protein localises to the cell membrane. It is found in the lysosome. The protein resides in the endosome. It localises to the early endosome. Functionally, adapter protein that plays a role in regulating cell-surface expression of adrenergic receptors and probably also other G protein-coupled receptors. Plays a role in NEDD4-mediated ubiquitination and endocytosis af activated ADRB2 and subsequent ADRB2 degradation. May recruit NEDD4 to ADRB2. Alternatively, may function as adapter protein that does not play a major role in recruiting NEDD4 to ADRB2, but rather plays a role in a targeting ADRB2 to endosomes. The polypeptide is Arrestin domain-containing protein 3 (ARRDC3) (Pongo abelii (Sumatran orangutan)).